The chain runs to 75 residues: Small ribosomal subunit protein bS18c (75 aa).

Over residues 1–12 (MNKSKRSFRRRL) the composition is skewed to basic residues. Residues 1–21 (MNKSKRSFRRRLPPIGSRDQI) are disordered.

It belongs to the bacterial ribosomal protein bS18 family. As to quaternary structure, part of the 30S ribosomal subunit.

Its subcellular location is the plastid. It is found in the chloroplast. The sequence is that of Small ribosomal subunit protein bS18c from Cycas taitungensis (Prince sago).